A 379-amino-acid polypeptide reads, in one-letter code: Queuine tRNA-ribosyltransferase (379 aa).

Asp96 functions as the Proton acceptor in the catalytic mechanism. Substrate contacts are provided by residues 96–100 (DSGGF), Asp150, Gln196, and Gly223. The interval 254–260 (GIGTPDY) is RNA binding. Residue Asp273 is the Nucleophile of the active site. Zn(2+) contacts are provided by Cys311, Cys313, Cys316, and His342.

It belongs to the queuine tRNA-ribosyltransferase family. As to quaternary structure, homodimer. Within each dimer, one monomer is responsible for RNA recognition and catalysis, while the other monomer binds to the replacement base PreQ1. It depends on Zn(2+) as a cofactor.

The enzyme catalyses 7-aminomethyl-7-carbaguanine + guanosine(34) in tRNA = 7-aminomethyl-7-carbaguanosine(34) in tRNA + guanine. Its pathway is tRNA modification; tRNA-queuosine biosynthesis. Catalyzes the base-exchange of a guanine (G) residue with the queuine precursor 7-aminomethyl-7-deazaguanine (PreQ1) at position 34 (anticodon wobble position) in tRNAs with GU(N) anticodons (tRNA-Asp, -Asn, -His and -Tyr). Catalysis occurs through a double-displacement mechanism. The nucleophile active site attacks the C1' of nucleotide 34 to detach the guanine base from the RNA, forming a covalent enzyme-RNA intermediate. The proton acceptor active site deprotonates the incoming PreQ1, allowing a nucleophilic attack on the C1' of the ribose to form the product. After dissociation, two additional enzymatic reactions on the tRNA convert PreQ1 to queuine (Q), resulting in the hypermodified nucleoside queuosine (7-(((4,5-cis-dihydroxy-2-cyclopenten-1-yl)amino)methyl)-7-deazaguanosine). In Treponema denticola (strain ATCC 35405 / DSM 14222 / CIP 103919 / JCM 8153 / KCTC 15104), this protein is Queuine tRNA-ribosyltransferase.